The primary structure comprises 350 residues: Fe(3+) ions import ATP-binding protein FbpC (350 aa).

The 233-residue stretch at 4-236 (LDIINLSKSF…PNDEQTAHFL (233 aa)) folds into the ABC transporter domain. ATP is bound at residue 36–43 (GPSGSGKT).

It belongs to the ABC transporter superfamily. Fe(3+) ion importer (TC 3.A.1.10) family. The complex is composed of two ATP-binding proteins (FbpC), two transmembrane proteins (FbpB) and a solute-binding protein (FbpA).

Its subcellular location is the cell inner membrane. It catalyses the reaction Fe(3+)(out) + ATP + H2O = Fe(3+)(in) + ADP + phosphate + H(+). Its function is as follows. Part of the ABC transporter complex FbpABC involved in Fe(3+) ions import. Responsible for energy coupling to the transport system. In Pseudomonas fluorescens (strain Pf0-1), this protein is Fe(3+) ions import ATP-binding protein FbpC.